The chain runs to 778 residues: MMKNLNGRAHNACYHPYLHQLHQAQQLQHQQQQQQQQQQQTQLQQTPHAAHTQQNGLTQNAQPQIQWPYNSSAAANQYYQQQQQQQQQEQQMLRQRQLPTQQPAASYEQQQQQPQQHQHLQQQQQQHQLRQTFTNAATNTNAAAMAAMCQMQNFFTQQQQQQQQQEFNNNCVHINYNQQQQQQPTAAVATTTPTQKATPTKTTPTNNPTTTTNNSTTTTTTNGDKFAMDASEIASFLASELFMQQLGTFDGIQSAPTLTTPTLTPTTLRSIEETFFEMTNDAPYQAGFKPPPLAPLVNNNNNNNGNGNGNGNGNGNVLASSVVPTTTTTATIIGVSNPLISQQQQQQQQQVFDCGASVMPGSDTEESNGSWADGQMNEDQSISDTSSGATDSTSYQNGHMMGNSGGGNGGGTGGANNFSNVLAAAGRNTNTSNSATPARRGGGRRPNRSANMTPEEEEKRRIRRERNKQAAARCRKRRVDQTNELTEEVELLEKRGENLKKEMELLNETKNQLEYFLQAHRPTCQKVRADMLSVTTCNGLIGPPALLSAGSCGSGSSHHNNNSNSNDSSSGTITGLDATLNSTGRSNSPLDLKPVPIDEDLLLHIKDEPLDGALDSSSSLDQDGPPPHKRFALPNIATLMTPTGPAGSLQTPVSGTAPHGFGSFPTTISNISNISSIHNGPTLNSLNKMPKERPNTLAFQRPFGGQMQLSGSGRAPTQIQGVPIQTPSTGTFNFDSLMDGGTGLTPVSGPLIPNCTSQNKHPLELPTPTTEPSKLVSL.

Composition is skewed to low complexity over residues 24 to 54 (AQQL…HTQQ) and 77 to 98 (QYYQ…QRQL). 6 disordered regions span residues 24-57 (AQQL…QNGL), 76-130 (NQYY…HQLR), 183-223 (QPTA…TTNG), 294-320 (APLV…VLAS), 356-414 (ASVM…GTGG), and 427-478 (RNTN…RKRR). The span at 99 to 108 (PTQQPAASYE) shows a compositional bias: polar residues. 2 stretches are compositionally biased toward low complexity: residues 109 to 130 (QQQQ…HQLR) and 183 to 222 (QPTA…TTTN). The segment covering 382-402 (ISDTSSGATDSTSYQNGHMMG) has biased composition (low complexity). Gly residues predominate over residues 403–414 (NSGGGNGGGTGG). The span at 427 to 436 (RNTNTSNSAT) shows a compositional bias: polar residues. The bZIP domain occupies 457 to 520 (EEKRRIRRER…NQLEYFLQAH (64 aa)). The segment at 459–478 (KRRIRRERNKQAAARCRKRR) is basic motif. Positions 485–513 (LTEEVELLEKRGENLKKEMELLNETKNQL) are leucine-zipper. Residues 550 to 571 (GSCGSGSSHHNNNSNSNDSSSG) show a composition bias toward low complexity. Disordered regions lie at residues 550–594 (GSCG…DLKP) and 756–778 (TSQN…LVSL). Residues 579-589 (TLNSTGRSNSP) are compositionally biased toward polar residues. Phosphoserine is present on Ser-588.

The protein belongs to the bZIP family. Fos subfamily. In terms of assembly, homodimer. Heterodimer with Jra. The kay-Jra heterodimer binds more stably to the AP-1 site than either of the two proteins alone.

It localises to the nucleus. Developmentally regulated transcription factor AP-1 binds and recognizes the enhancer DNA sequence: 5'-TGA[CG]TCA-3'. May play a role in the function or determination of a particular subset of cells in the developing embryo. It is able to carry out its function either independently of or in conjunction with Jra. In Drosophila pseudoobscura pseudoobscura (Fruit fly), this protein is Transcription factor kayak.